The following is a 217-amino-acid chain: Uridylate kinase (217 aa).

Residue 6–10 (KLSGR) coordinates ATP. Gly38 provides a ligand contact to UMP. ATP is bound by residues Gly39 and Arg43. UMP contacts are provided by residues Asp60 and 107-113 (FQPGQST). Residues Asn134, Tyr139, and Asp142 each coordinate ATP.

Belongs to the UMP kinase family. As to quaternary structure, homohexamer.

It is found in the cytoplasm. It carries out the reaction UMP + ATP = UDP + ADP. It functions in the pathway pyrimidine metabolism; CTP biosynthesis via de novo pathway; UDP from UMP (UMPK route): step 1/1. With respect to regulation, inhibited by UTP. Functionally, catalyzes the reversible phosphorylation of UMP to UDP. The sequence is that of Uridylate kinase from Pyrobaculum neutrophilum (strain DSM 2338 / JCM 9278 / NBRC 100436 / V24Sta) (Thermoproteus neutrophilus).